We begin with the raw amino-acid sequence, 261 residues long: Acyl-[acyl-carrier-protein]--UDP-N-acetylglucosamine O-acyltransferase (261 aa).

It belongs to the transferase hexapeptide repeat family. LpxA subfamily. Homotrimer.

The protein resides in the cytoplasm. It catalyses the reaction a (3R)-hydroxyacyl-[ACP] + UDP-N-acetyl-alpha-D-glucosamine = a UDP-3-O-[(3R)-3-hydroxyacyl]-N-acetyl-alpha-D-glucosamine + holo-[ACP]. Its pathway is glycolipid biosynthesis; lipid IV(A) biosynthesis; lipid IV(A) from (3R)-3-hydroxytetradecanoyl-[acyl-carrier-protein] and UDP-N-acetyl-alpha-D-glucosamine: step 1/6. In terms of biological role, involved in the biosynthesis of lipid A, a phosphorylated glycolipid that anchors the lipopolysaccharide to the outer membrane of the cell. This Trichlorobacter lovleyi (strain ATCC BAA-1151 / DSM 17278 / SZ) (Geobacter lovleyi) protein is Acyl-[acyl-carrier-protein]--UDP-N-acetylglucosamine O-acyltransferase.